A 1635-amino-acid polypeptide reads, in one-letter code: U3 small nucleolar RNA-associated protein 10 (1635 aa).

The interval Thr781–Val803 is disordered. The next 2 membrane-spanning stretches (helical) occupy residues Pro1141–Gly1161 and Ile1288–Val1308.

Belongs to the HEATR1/UTP10 family. As to quaternary structure, component of the ribosomal small subunit (SSU) processome.

The protein resides in the nucleus. The protein localises to the nucleolus. Its subcellular location is the membrane. In terms of biological role, involved in nucleolar processing of pre-18S ribosomal RNA. Involved in ribosome biosynthesis. The protein is U3 small nucleolar RNA-associated protein 10 of Yarrowia lipolytica (strain CLIB 122 / E 150) (Yeast).